A 390-amino-acid chain; its full sequence is Isoaspartyl dipeptidase (390 aa).

Histidine 68 and histidine 70 together coordinate Zn(2+). Substrate is bound by residues glycine 75 to glutamate 77, threonine 106, and tyrosine 137. Residue lysine 162 participates in Zn(2+) binding. At lysine 162 the chain carries N6-carboxylysine. Arginine 169 is a binding site for substrate. Residues histidine 201 and histidine 230 each coordinate Zn(2+). Arginine 233 contacts substrate. Aspartate 285 serves as a coordination point for Zn(2+). The active-site Proton acceptor is the aspartate 285. Serine 289 contacts substrate.

This sequence belongs to the peptidase M38 family. Requires Zn(2+) as cofactor. It depends on Co(2+) as a cofactor. In terms of processing, carboxylation allows a single lysine to coordinate two zinc ions.

It localises to the cytoplasm. With respect to regulation, P-hydroxymercuribenzoate causes a slight inhibition (8 to 17 %). Iodoacetamide, o-iodosobenzoate and ammonium persulfate do not inhibit the enzyme activity. Its function is as follows. Catalyzes the hydrolytic cleavage of a subset of L-isoaspartyl (L-beta-aspartyl) dipeptides. Used to degrade proteins damaged by L-isoaspartyl residues formation. The best substrate for the enzyme reported thus far is iso-Asp-Leu. This chain is Isoaspartyl dipeptidase (iadA), found in Escherichia coli (strain K12).